A 479-amino-acid polypeptide reads, in one-letter code: Trigger factor (479 aa).

In terms of domain architecture, PPIase FKBP-type spans 174–261 (GDIAVVSFSG…LKELKTRELP (88 aa)). Residues 438 to 479 (VLESEAKTSKPAAKSKGSKTKSTKTKTNKANTEKPASDKSKS) form a disordered region. The segment covering 453-464 (KGSKTKSTKTKT) has biased composition (basic residues). The span at 468–479 (NTEKPASDKSKS) shows a compositional bias: basic and acidic residues.

The protein belongs to the FKBP-type PPIase family. Tig subfamily.

It is found in the cytoplasm. It catalyses the reaction [protein]-peptidylproline (omega=180) = [protein]-peptidylproline (omega=0). Involved in protein export. Acts as a chaperone by maintaining the newly synthesized protein in an open conformation. Functions as a peptidyl-prolyl cis-trans isomerase. In Prochlorococcus marinus (strain MIT 9313), this protein is Trigger factor.